The sequence spans 76 residues: Putative membrane protein insertion efficiency factor (76 aa).

Belongs to the UPF0161 family.

It localises to the cell inner membrane. Functionally, could be involved in insertion of integral membrane proteins into the membrane. The sequence is that of Putative membrane protein insertion efficiency factor from Anaeromyxobacter dehalogenans (strain 2CP-C).